A 241-amino-acid chain; its full sequence is ATP synthase subunit a (241 aa).

A run of 5 helical transmembrane segments spans residues 30 to 50 (GQVFLSSWILIGILLAVVLVG), 89 to 109 (LPFIGTLFLFIFVSNWGGALI), 128 to 148 (INTTVAMALLVSLAYFYAGLS), 193 to 213 (LAVGVLVYLVPLIVPLPVMLL), and 214 to 234 (GLFTSAIQALIFATLASFYIG).

It belongs to the ATPase A chain family. In terms of assembly, F-type ATPases have 2 components, CF(1) - the catalytic core - and CF(0) - the membrane proton channel. CF(1) has five subunits: alpha(3), beta(3), gamma(1), delta(1), epsilon(1). CF(0) has four main subunits: a, b, b' and c.

It is found in the cellular thylakoid membrane. Functionally, key component of the proton channel; it plays a direct role in the translocation of protons across the membrane. The sequence is that of ATP synthase subunit a from Synechococcus sp. (strain CC9605).